Consider the following 409-residue polypeptide: MASNEMEKSSKEKEPKTPPPSSTAPPSSQEPSSAVSAGMATPDWSGFQAYSPMPPPHGYVASSPQPHPYMWGVQHMMPPYGTPPHPYVAMYPPGGMYAHPSMPPGSYPYSPYAMPSPNGMTEVSGNTTGGTDGDAKQSEVKEKLPIKRSRGSLGSLNMITGKNNEPGKNSGASANGAYSKSGESASDGSSEGSDGNSQNDSGSGLDGKDAEAASENGGSANGPQNGSAGTPILPVSQTVPIMPMTAAGVPGPPTNLNIGMDYWGAPTSAGIPGMHGKVSTPVPGVVAPGSRDGGHSQPWLQDDRELKRQRRKQSNRESARRSRLRKQAECDELAQRAEVLNEENTNLRAEINKLKSQCEELTTENTSLKDQLSLFPPLEGISMDNDHQEPDTNQTGAAERKVDSYKDST.

Basic and acidic residues predominate over residues 1 to 16; it reads MASNEMEKSSKEKEPK. Disordered regions lie at residues 1–63, 118–236, 274–327, and 362–409; these read MASN…VASS, NGMT…LPVS, MHGK…LRKQ, and TTEN…KDST. Residues 24–34 are compositionally biased toward low complexity; sequence APPSSQEPSSA. Over residues 133-145 the composition is skewed to basic and acidic residues; it reads GDAKQSEVKEKLP. Polar residues predominate over residues 152-178; the sequence is SLGSLNMITGKNNEPGKNSGASANGAY. The segment covering 179–203 has biased composition (low complexity); it reads SKSGESASDGSSEGSDGNSQNDSGS. Positions 216–228 are enriched in polar residues; it reads NGGSANGPQNGSA. One can recognise a bZIP domain in the interval 305-368; it reads ELKRQRRKQS…EELTTENTSL (64 aa). Residues 307–323 carry the Bipartite nuclear localization signal motif; it reads KRQRRKQSNRESARRSR. Residues 307–326 are basic motif; sequence KRQRRKQSNRESARRSRLRK. Basic and acidic residues predominate over residues 314 to 327; sequence SNRESARRSRLRKQ. The interval 333–368 is leucine-zipper; it reads LAQRAEVLNEENTNLRAEINKLKSQCEELTTENTSL. Residues 398-409 are compositionally biased toward basic and acidic residues; that stretch reads AERKVDSYKDST.

The protein belongs to the bZIP family. Monomer, homodimer and heterodimers with BZIP68 and GBF1/BZIP41. Heterodimers with GBF2/BZIP54 and GBF3/BZIP55. Binds DNA as monomer and forms homo- and heterodimers. The monomeric form is redox regulated. Interacts with GIP1.

Its subcellular location is the nucleus. In terms of biological role, transcriptional activator that binds to the G-box motif (5'-CACGTG-3') and other cis-acting elements with 5'-ACGT-3' core, such as Hex, C-box and as-1 motifs. Possesses high binding affinity to G-box, much lower affinity to Hex and C-box, and little affinity to as-1 element. G-box and G-box-like motifs are cis-acting elements defined in promoters of certain plant genes which are regulated by such diverse stimuli as light-induction or hormone control. Binds to the G-box motif 5'-CACGTG-3' of LHCB2.4 (At3g27690) promoter. May act as transcriptional repressor in light-regulated expression of LHCB2.4. Binds DNA as monomer. DNA-binding activity is redox-dependent. This chain is bZIP transcription factor 16, found in Arabidopsis thaliana (Mouse-ear cress).